Reading from the N-terminus, the 892-residue chain is Phenylalanine--tRNA ligase beta subunit (892 aa).

The tRNA-binding domain occupies 39–150 (NPGVEGVVVG…PGLEPGMDVA (112 aa)). In terms of domain architecture, B5 spans 406–569 (AVPPVILLRT…RCEGYDAIPL (164 aa)). An insert region spans residues 442–518 (VLTPADLAAD…ALLGGGESDG (77 aa)). Mg(2+)-binding residues include aspartate 547, aspartate 553, glutamate 556, and glutamate 557. The FDX-ACB domain maps to 799–891 (PRFPAVTRDV…ALKALGAELR (93 aa)).

This sequence belongs to the phenylalanyl-tRNA synthetase beta subunit family. Type 1 subfamily. In terms of assembly, tetramer of two alpha and two beta subunits. The cofactor is Mg(2+).

The protein localises to the cytoplasm. It carries out the reaction tRNA(Phe) + L-phenylalanine + ATP = L-phenylalanyl-tRNA(Phe) + AMP + diphosphate + H(+). The protein is Phenylalanine--tRNA ligase beta subunit of Symbiobacterium thermophilum (strain DSM 24528 / JCM 14929 / IAM 14863 / T).